Reading from the N-terminus, the 205-residue chain is Recombination protein RecR (205 aa).

The C4-type zinc finger occupies 59–74; that stretch reads CSVCFHLSAEPVCEVC. Residues 82–181 enclose the Toprim domain; that stretch reads GTLCVVADSR…KVTRIAFGLP (100 aa).

This sequence belongs to the RecR family.

In terms of biological role, may play a role in DNA repair. It seems to be involved in an RecBC-independent recombinational process of DNA repair. It may act with RecF and RecO. The sequence is that of Recombination protein RecR from Cyanothece sp. (strain PCC 7425 / ATCC 29141).